The sequence spans 904 residues: Pantothenate kinase 2 (904 aa).

Residues Met1–Leu56 are disordered. The segment at Met1–Trp472 is pantothenate kinase. Positions Met473–Pro904 are 4'-phosphopantetheine phosphatase. The Mn(2+) site is built by Asp735, Asn736, and Asp771. The Subfamily II EGMGR motif motif lies at Glu855 to Arg859.

In the N-terminal section; belongs to the type II pantothenate kinase family. The protein in the C-terminal section; belongs to the damage-control phosphatase family. Phosphopantetheine phosphatase II subfamily. Mn(2+) is required as a cofactor. It depends on Ni(2+) as a cofactor.

It carries out the reaction (R)-pantothenate + ATP = (R)-4'-phosphopantothenate + ADP + H(+). It catalyses the reaction (R)-4'-phosphopantothenate + H2O = (R)-pantothenate + phosphate. The catalysed reaction is (R)-4'-phosphopantetheine + H2O = (R)-pantetheine + phosphate. The enzyme catalyses (R)-4'-phosphopantetheine sulfonate + H2O = (R)-pantetheine sulfonate + phosphate. The protein operates within cofactor biosynthesis; coenzyme A biosynthesis; CoA from (R)-pantothenate: step 1/5. Functionally, catalyzes the phosphorylation of pantothenate the first step in CoA biosynthesis. May play a role in the physiological regulation of the intracellular CoA concentration. Functionally redudant with PANK1. The phosphatase activity shows preference for normal or oxidatively damaged intermediates of 4'-phosphopantetheine, which provides strong indirect evidence that the phosphatase activity pre-empts damage in the CoA pathway. Hydrolyzing excess 4'-phosphopantetheine could constitute a directed overflow mechanism to prevent its oxidation to the S-sulfonate, sulfonate, or other forms. Hydrolyzing 4'-phosphopantetheine sulfonate or S-sulfonate would forestall their conversion to inactive forms of CoA and acyl carrier protein. In Oryza sativa subsp. japonica (Rice), this protein is Pantothenate kinase 2.